Consider the following 126-residue polypeptide: UPF0102 protein DNO_0639 (126 aa).

The protein belongs to the UPF0102 family.

The polypeptide is UPF0102 protein DNO_0639 (Dichelobacter nodosus (strain VCS1703A)).